Reading from the N-terminus, the 1090-residue chain is ATP-dependent helicase/deoxyribonuclease subunit B (1090 aa).

Gly-7–Ser-14 is an ATP binding site. Positions 719, 1035, 1038, and 1044 each coordinate [4Fe-4S] cluster.

Belongs to the helicase family. AddB/RexB type 1 subfamily. As to quaternary structure, heterodimer of AddA and AddB. Mg(2+) is required as a cofactor. Requires [4Fe-4S] cluster as cofactor.

Functionally, the heterodimer acts as both an ATP-dependent DNA helicase and an ATP-dependent, dual-direction single-stranded exonuclease. Recognizes the chi site generating a DNA molecule suitable for the initiation of homologous recombination. The AddB subunit has 5' -&gt; 3' nuclease activity but not helicase activity. The polypeptide is ATP-dependent helicase/deoxyribonuclease subunit B (Carboxydothermus hydrogenoformans (strain ATCC BAA-161 / DSM 6008 / Z-2901)).